Reading from the N-terminus, the 218-residue chain is Probable transaldolase (218 aa).

K87 functions as the Schiff-base intermediate with substrate in the catalytic mechanism.

It belongs to the transaldolase family. Type 3B subfamily.

It localises to the cytoplasm. The enzyme catalyses D-sedoheptulose 7-phosphate + D-glyceraldehyde 3-phosphate = D-erythrose 4-phosphate + beta-D-fructose 6-phosphate. It functions in the pathway carbohydrate degradation; pentose phosphate pathway; D-glyceraldehyde 3-phosphate and beta-D-fructose 6-phosphate from D-ribose 5-phosphate and D-xylulose 5-phosphate (non-oxidative stage): step 2/3. Transaldolase is important for the balance of metabolites in the pentose-phosphate pathway. The sequence is that of Probable transaldolase from Flavobacterium psychrophilum (strain ATCC 49511 / DSM 21280 / CIP 103535 / JIP02/86).